The chain runs to 712 residues: Ribosomal RNA large subunit methyltransferase K/L (712 aa).

Positions 46–157 (GAYQALLHSR…RENMVVSLDL (112 aa)) constitute a THUMP domain.

It belongs to the methyltransferase superfamily. RlmKL family.

Its subcellular location is the cytoplasm. The catalysed reaction is guanosine(2445) in 23S rRNA + S-adenosyl-L-methionine = N(2)-methylguanosine(2445) in 23S rRNA + S-adenosyl-L-homocysteine + H(+). The enzyme catalyses guanosine(2069) in 23S rRNA + S-adenosyl-L-methionine = N(2)-methylguanosine(2069) in 23S rRNA + S-adenosyl-L-homocysteine + H(+). Its function is as follows. Specifically methylates the guanine in position 2445 (m2G2445) and the guanine in position 2069 (m7G2069) of 23S rRNA. This Actinobacillus pleuropneumoniae serotype 3 (strain JL03) protein is Ribosomal RNA large subunit methyltransferase K/L.